A 1083-amino-acid polypeptide reads, in one-letter code: Ubiquitin carboxyl-terminal hydrolase 28 (1083 aa).

A disordered region spans residues 60-82; the sequence is DQRVKEPSHDTAATEPSEVEESA. At Ser-67 the chain carries Phosphoserine. The UIM domain maps to 97-116; that stretch reads DNKDDLQAAIALSLLESPNI. Lys-99 is covalently cross-linked (Glycyl lysine isopeptide (Lys-Gly) (interchain with G-Cter in SUMO2)). The USP domain occupies 162–656; it reads VGLKNVGNTC…SAYCLMYIND (495 aa). The active-site Nucleophile is the Cys-171. A Phosphoserine modification is found at Ser-376. The interval 483 to 539 is disordered; it reads DLTAKESSSPKSCSQNAEGSFSSPEDALPNSEVMNGPFTSPHSSLEMPAPPPAPRTV. Polar residues predominate over residues 487 to 505; that stretch reads KESSSPKSCSQNAEGSFSS. Position 556 is a phosphoserine (Ser-556). The Proton acceptor role is filled by His-606. A disordered region spans residues 703 to 728; the sequence is EEQSCKIPQMESSPNSSSQDFSTSQE. Positions 714–728 are enriched in low complexity; it reads SSPNSSSQDFSTSQE. Position 720 is a phosphoserine (Ser-720). Thr-1054 is subject to Phosphothreonine.

It belongs to the peptidase C19 family. USP28 subfamily. Interacts with ZNF304. Interacts with PRKD1. Interacts with TP53BP1. Interacts with FBXW7; following DNA damage, dissociates from FBXW7 leading to degradation of MYC. In terms of processing, degraded upon nickel ion level or hypoxia exposure. Post-translationally, phosphorylated upon DNA damage at Ser-67 and Ser-720, by ATM or ATR. Phosphorylated by PRKD1.

The protein localises to the nucleus. It is found in the nucleoplasm. The catalysed reaction is Thiol-dependent hydrolysis of ester, thioester, amide, peptide and isopeptide bonds formed by the C-terminal Gly of ubiquitin (a 76-residue protein attached to proteins as an intracellular targeting signal).. Its function is as follows. Deubiquitinase involved in DNA damage response checkpoint and MYC proto-oncogene stability. Involved in DNA damage induced apoptosis by specifically deubiquitinating proteins of the DNA damage pathway such as CLSPN. Also involved in G2 DNA damage checkpoint, by deubiquitinating CLSPN, and preventing its degradation by the anaphase promoting complex/cyclosome (APC/C). In contrast, it does not deubiquitinate PLK1. Specifically deubiquitinates MYC in the nucleoplasm, leading to prevent MYC degradation by the proteasome: acts by specifically interacting with FBXW7 (FBW7alpha) in the nucleoplasm and counteracting ubiquitination of MYC by the SCF(FBXW7) complex. Deubiquitinates ZNF304, hence preventing ZNF304 degradation by the proteasome and leading to the activated KRAS-mediated promoter hypermethylation and transcriptional silencing of tumor suppressor genes (TSGs) in a subset of colorectal cancers (CRC) cells. This Rattus norvegicus (Rat) protein is Ubiquitin carboxyl-terminal hydrolase 28 (Usp28).